Reading from the N-terminus, the 453-residue chain is Allantoinase (453 aa).

The Zn(2+) site is built by H59, H61, K146, H186, H242, and D315. N6-carboxylysine is present on K146.

The protein belongs to the metallo-dependent hydrolases superfamily. Allantoinase family. Homotetramer. Zn(2+) is required as a cofactor. In terms of processing, carboxylation allows a single lysine to coordinate two zinc ions.

It carries out the reaction (S)-allantoin + H2O = allantoate + H(+). The protein operates within nitrogen metabolism; (S)-allantoin degradation; allantoate from (S)-allantoin: step 1/1. Catalyzes the conversion of allantoin (5-ureidohydantoin) to allantoic acid by hydrolytic cleavage of the five-member hydantoin ring. The polypeptide is Allantoinase (Escherichia coli (strain SMS-3-5 / SECEC)).